The primary structure comprises 306 residues: Probable zinc metalloprotease VDBG_06923 (306 aa).

An N-terminal signal peptide occupies residues 1–28 (MNYEAEQPGANDDASGVAVALELARVLA). Zn(2+) contacts are provided by D12 and E45. N-linked (GlcNAc...) asparagine glycosylation occurs at N60. D72 contacts Zn(2+). A Fibronectin type-III domain is found at 218–306 (APAKVNNVRV…KSPVTIPFPT (89 aa)). N-linked (GlcNAc...) asparagine glycans are attached at residues N228, N234, and N244.

This sequence belongs to the peptidase M28 family. M28B subfamily. It depends on Zn(2+) as a cofactor.

The protein resides in the secreted. This Verticillium alfalfae (strain VaMs.102 / ATCC MYA-4576 / FGSC 10136) (Verticillium wilt of alfalfa) protein is Probable zinc metalloprotease VDBG_06923.